Reading from the N-terminus, the 732-residue chain is Probable zinc transporter cis4 (732 aa).

12 helical membrane passes run 52–72 (ETLG…GLEV), 79–99 (FYLI…LGIY), 111–131 (VIIA…LGTL), 163–183 (YIAF…LGYF), 189–209 (VFYA…FYLV), 219–239 (LAFL…VLPL), 240–260 (GTIN…IFCI), 268–288 (IQFY…SAII), 350–370 (IFYF…YGLW), 380–400 (AIHM…TTLA), 415–435 (IEAL…FSIV), and 453–473 (LLLV…AFNH). Positions 526-547 (HVSQHEHTHENSQEHHHEHNHN) are disordered. A run of 2 helical transmembrane segments spans residues 586 to 606 (IFLH…STIL) and 615 to 635 (FDPL…LPLI).

This sequence belongs to the cation diffusion facilitator (CDF) transporter (TC 2.A.4) family. SLC30A subfamily. As to quaternary structure, interacts with zrg17.

It is found in the endoplasmic reticulum membrane. The protein localises to the golgi apparatus. It localises to the cis-Golgi network membrane. Its function is as follows. Probable zinc transporter involved in Golgi membrane trafficking through the regulation of zinc homeostasis. This Schizosaccharomyces pombe (strain 972 / ATCC 24843) (Fission yeast) protein is Probable zinc transporter cis4 (cis4).